The chain runs to 87 residues: Cell division topological specificity factor (87 aa).

The protein belongs to the MinE family.

In terms of biological role, prevents the cell division inhibition by proteins MinC and MinD at internal division sites while permitting inhibition at polar sites. This ensures cell division at the proper site by restricting the formation of a division septum at the midpoint of the long axis of the cell. In Delftia acidovorans (strain DSM 14801 / SPH-1), this protein is Cell division topological specificity factor.